Reading from the N-terminus, the 360-residue chain is Polyamine aminopropyltransferase 2 (360 aa).

Residues 68 to 299 form the PABS domain; sequence DIWDEISLKE…TDWGFHIAAN (232 aa). Gln94 lines the S-methyl-5'-thioadenosine pocket. Spermidine is bound by residues His123 and Asp147. S-methyl-5'-thioadenosine contacts are provided by residues Asp167 and 201–202; that span reads DA. The Proton acceptor role is filled by Asp219.

This sequence belongs to the spermidine/spermine synthase family. Homodimer or homotetramer.

It localises to the cytoplasm. It catalyses the reaction S-adenosyl 3-(methylsulfanyl)propylamine + putrescine = S-methyl-5'-thioadenosine + spermidine + H(+). It functions in the pathway amine and polyamine biosynthesis; spermidine biosynthesis; spermidine from putrescine: step 1/1. Functionally, catalyzes the irreversible transfer of a propylamine group from the amino donor S-adenosylmethioninamine (decarboxy-AdoMet) to putrescine (1,4-diaminobutane) to yield spermidine. This is Polyamine aminopropyltransferase 2 from Bacillus anthracis.